The following is a 115-amino-acid chain: NADH-ubiquinone oxidoreductase chain 3 (115 aa).

The next 3 helical transmembrane spans lie at 5–25 (TALL…FWFF), 55–75 (FFLV…LLPL), and 86–106 (IMML…AYEW).

The protein belongs to the complex I subunit 3 family. Core subunit of respiratory chain NADH dehydrogenase (Complex I) which is composed of 45 different subunits. Interacts with TMEM186. Interacts with TMEM242.

It localises to the mitochondrion inner membrane. The enzyme catalyses a ubiquinone + NADH + 5 H(+)(in) = a ubiquinol + NAD(+) + 4 H(+)(out). In terms of biological role, core subunit of the mitochondrial membrane respiratory chain NADH dehydrogenase (Complex I) which catalyzes electron transfer from NADH through the respiratory chain, using ubiquinone as an electron acceptor. Essential for the catalytic activity of complex I. The polypeptide is NADH-ubiquinone oxidoreductase chain 3 (Peromyscus sejugis (Santa Cruz mouse)).